Consider the following 274-residue polypeptide: Large ribosomal subunit protein uL2 (274 aa).

Disordered regions lie at residues 28-53 and 221-274; these read KPYA…TTRH and RGTA…RTKK. A compositionally biased stretch (low complexity) spans 39–48; that stretch reads KSGGRNNNGR. Over residues 253–274 the composition is skewed to basic residues; it reads KGKKTRKNKRTEHFIVHRRTKK.

It belongs to the universal ribosomal protein uL2 family. Part of the 50S ribosomal subunit. Forms a bridge to the 30S subunit in the 70S ribosome.

One of the primary rRNA binding proteins. Required for association of the 30S and 50S subunits to form the 70S ribosome, for tRNA binding and peptide bond formation. It has been suggested to have peptidyltransferase activity; this is somewhat controversial. Makes several contacts with the 16S rRNA in the 70S ribosome. The sequence is that of Large ribosomal subunit protein uL2 from Proteus mirabilis (strain HI4320).